We begin with the raw amino-acid sequence, 215 residues long: Octanoyltransferase (215 aa).

The region spanning 31–206 is the BPL/LPL catalytic domain; that stretch reads TSAEDEIWLV…QLVKHLDYAE (176 aa). Substrate-binding positions include 70-77, 137-139, and 150-152; these read RGGQVTYH, SLG, and GLA. Cysteine 168 (acyl-thioester intermediate) is an active-site residue.

This sequence belongs to the LipB family.

It localises to the cytoplasm. The enzyme catalyses octanoyl-[ACP] + L-lysyl-[protein] = N(6)-octanoyl-L-lysyl-[protein] + holo-[ACP] + H(+). The protein operates within protein modification; protein lipoylation via endogenous pathway; protein N(6)-(lipoyl)lysine from octanoyl-[acyl-carrier-protein]: step 1/2. Catalyzes the transfer of endogenously produced octanoic acid from octanoyl-acyl-carrier-protein onto the lipoyl domains of lipoate-dependent enzymes. Lipoyl-ACP can also act as a substrate although octanoyl-ACP is likely to be the physiological substrate. The protein is Octanoyltransferase of Pseudomonas fluorescens (strain SBW25).